Reading from the N-terminus, the 670-residue chain is tRNA 5-methylaminomethyl-2-thiouridine biosynthesis bifunctional protein MnmC (670 aa).

A tRNA (mnm(5)s(2)U34)-methyltransferase region spans residues 1–242 (MTFSVQHAEI…KRECLSGLKI (242 aa)). Residues 269-670 (IGGGIASLCA…KKWLKGSKVE (402 aa)) form an FAD-dependent cmnm(5)s(2)U34 oxidoreductase region.

This sequence in the N-terminal section; belongs to the methyltransferase superfamily. tRNA (mnm(5)s(2)U34)-methyltransferase family. The protein in the C-terminal section; belongs to the DAO family. FAD is required as a cofactor.

It is found in the cytoplasm. The catalysed reaction is 5-aminomethyl-2-thiouridine(34) in tRNA + S-adenosyl-L-methionine = 5-methylaminomethyl-2-thiouridine(34) in tRNA + S-adenosyl-L-homocysteine + H(+). Catalyzes the last two steps in the biosynthesis of 5-methylaminomethyl-2-thiouridine (mnm(5)s(2)U) at the wobble position (U34) in tRNA. Catalyzes the FAD-dependent demodification of cmnm(5)s(2)U34 to nm(5)s(2)U34, followed by the transfer of a methyl group from S-adenosyl-L-methionine to nm(5)s(2)U34, to form mnm(5)s(2)U34. This Haemophilus influenzae (strain PittEE) protein is tRNA 5-methylaminomethyl-2-thiouridine biosynthesis bifunctional protein MnmC.